Consider the following 100-residue polypeptide: Small ribosomal subunit protein bS6 (100 aa).

It belongs to the bacterial ribosomal protein bS6 family.

Functionally, binds together with bS18 to 16S ribosomal RNA. In Tropheryma whipplei (strain Twist) (Whipple's bacillus), this protein is Small ribosomal subunit protein bS6.